A 457-amino-acid chain; its full sequence is MVLPHEPEFEQALHELETSLQPFLTTNPQYKKALEIIQVPERVLQFRVTWEDDQGKPQVNRGFRVQYNSALGPYKGGLRLHPTVNLSILKFLGFEQTFKNALTGLSMGGGKGGSDFDPKGKSDNEIRRFCVAFMSELFRHIGQDTDVPAGDIGTGAREIGFLFGAYRRLKNEFTGMLTGKGINWGGSFIRPEATGYGLIYYVEHMIAHACPEYSLDRPSTLVAISGSGNVSQFTALKVIELGATVLSLSDSKGSLISEKGYTKEAIEKIAELKLKGGALEAIVDDLGAGYTYHAGKRPWTLLPQVHIALPGATQNEVSQEEAEALVKAGTRIVAEGSNMGCTEEAIAIFENSRRASRAGVWYAPGKASNCGGVAVSGLEMAQNSQRLAWSTQEVDAKLKSIMAECYQICYTAGSRWSGEKVAEGVAEGEALPSLLSGANLAGFIKVADAMKEQGDWW.

Residue lysine 111 is part of the active site.

It belongs to the Glu/Leu/Phe/Val dehydrogenases family. Homohexamer.

The catalysed reaction is L-glutamate + NADP(+) + H2O = 2-oxoglutarate + NH4(+) + NADPH + H(+). This Agaricus bisporus (White button mushroom) protein is NADP-specific glutamate dehydrogenase (gdhA).